A 98-amino-acid polypeptide reads, in one-letter code: NADH-ubiquinone oxidoreductase chain 4L (98 aa).

3 helical membrane passes run 1–21 (MSLT…GLLL), 29–49 (SLLC…MTIL), and 61–81 (IILL…LVMV).

Belongs to the complex I subunit 4L family. Core subunit of respiratory chain NADH dehydrogenase (Complex I) which is composed of 45 different subunits.

The protein localises to the mitochondrion inner membrane. It carries out the reaction a ubiquinone + NADH + 5 H(+)(in) = a ubiquinol + NAD(+) + 4 H(+)(out). Core subunit of the mitochondrial membrane respiratory chain NADH dehydrogenase (Complex I) which catalyzes electron transfer from NADH through the respiratory chain, using ubiquinone as an electron acceptor. Part of the enzyme membrane arm which is embedded in the lipid bilayer and involved in proton translocation. The polypeptide is NADH-ubiquinone oxidoreductase chain 4L (MT-ND4L) (Vampyrodes caraccioli (Great stripe-faced bat)).